The following is a 319-amino-acid chain: Cytochrome f (319 aa).

The first 35 residues, 1–35, serve as a signal peptide directing secretion; that stretch reads MFQQMQKISLKLLKTTFLFLFATFILVGLPSTSQA. Positions 36, 56, 59, and 60 each coordinate heme. A helical membrane pass occupies residues 285 to 305; sequence IQGLIAFFISVIIAQTFLVLK.

This sequence belongs to the cytochrome f family. The 4 large subunits of the cytochrome b6-f complex are cytochrome b6, subunit IV (17 kDa polypeptide, petD), cytochrome f and the Rieske protein, while the 4 small subunits are PetG, PetL, PetM and PetN. The complex functions as a dimer. It depends on heme as a cofactor.

It is found in the plastid. The protein resides in the chloroplast thylakoid membrane. Its function is as follows. Component of the cytochrome b6-f complex, which mediates electron transfer between photosystem II (PSII) and photosystem I (PSI), cyclic electron flow around PSI, and state transitions. The polypeptide is Cytochrome f (Chlorokybus atmophyticus (Soil alga)).